The chain runs to 46 residues: Defensin-like protein 2 (46 aa).

Cystine bridges form between Cys3-Cys46, Cys13-Cys33, Cys19-Cys40, and Cys23-Cys42.

As to quaternary structure, monomer. In terms of tissue distribution, present in seeds, cotyledons and leaves. Not found in roots or stems.

Has antibacterial activity against the Gram-positive bacterium S.aureus and the Gram-negative bacteria E.coli and P.syringae. Does not have antibacterial activity against the phytopathogenic bacteria R.solanacearum, Rhataybacter sp and Erwinia sp. Does not inhibit trypsin, chymotrypsin or alpha-amylases. This is Defensin-like protein 2 from Vigna unguiculata (Cowpea).